Reading from the N-terminus, the 24-residue chain is Brevinin-1SPa (24 aa).

Cysteines 18 and 24 form a disulfide.

In terms of tissue distribution, expressed by the skin glands.

Its subcellular location is the secreted. Functionally, antimicrobial peptide with activity against Gram-negative and Gram-positive bacteria (MIC=13 uM against E.coli, MIC=3 uM against S.aureus) and fungi (MIC=6 uM against C.albicans). Shows hemolytic activity on human erythrocytes (HC(50)=7 uM). This chain is Brevinin-1SPa, found in Lithobates septentrionalis (Mink frog).